The sequence spans 812 residues: Leucine-rich repeat-containing protein 41 (812 aa).

The tract at residues 45–54 (ALFELCGRAV) is interaction with Elongin BC complex. A phosphoserine mark is found at Ser155, Ser276, and Ser326. The tract at residues 267 to 408 (GEASRGRAPS…GARTRQGPGA (142 aa)) is disordered. The residue at position 327 (Thr327) is a Phosphothreonine. Positions 354–381 (TKRSPSAPAATSSASSSTSSYKRAPASS) are enriched in low complexity. Ser357 and Ser373 each carry phosphoserine. The span at 387–401 (PLKRFKRAAGKKGAR) shows a compositional bias: basic residues. LRR repeat units follow at residues 487–507 (WVSL…IFRL), 518–530 (AGCR…LSDL), 531–555 (FSPL…VLSI), 613–635 (SGSL…FGLV), 636–659 (LQTL…LADC), 701–728 (NSTL…VFSE), and 731–752 (SSSL…LLEF).

As to quaternary structure, part of an E3 ubiquitin-protein ligase complex with Elongin BC (ELOB and ELOC), RBX1 and CUL5. Component of a probable ECS(LRRC41) complex which contains CUL5, RNF7/RBX2, Elongin BC and LRRC41. Interacts with CUL5, RNF7, ELOB and ELOC.

It functions in the pathway protein modification; protein ubiquitination. Functionally, probable substrate recognition component of an ECS (Elongin BC-CUL2/5-SOCS-box protein) E3 ubiquitin ligase complex which mediates the ubiquitination and subsequent proteasomal degradation of target proteins. The protein is Leucine-rich repeat-containing protein 41 (LRRC41) of Homo sapiens (Human).